A 337-amino-acid polypeptide reads, in one-letter code: ELAV-like protein 1-A (337 aa).

RRM domains lie at 20–109, 117–197, and 255–333; these read TNLI…FARP, ANLY…FAAN, and WCIF…FKTS.

This sequence belongs to the RRM elav family. In terms of assembly, interacts (via RRM3) with cirbp. Unable to form oligomers. Part of a ribonucleoprotein (RNP) complex, at least composed of elavl1/elrA and/or elavl2/elrB, igf2bp3/vg1RBP, ddx6/Xp54, ybx2/frgy2, lsm14b/rap55b and, in a subset of RNP complexes, stau1/staufen. Ubiquitously expressed in adults.

It localises to the cytoplasm. It is found in the cell cortex. In terms of biological role, RNA-binding protein that binds to the 3'-UTR region of mRNAs and increases their stability. Involved in embryonic stem cells (ESCs) differentiation: preferentially binds mRNAs that are not methylated by N6-methyladenosine (m6A), stabilizing them, promoting ESCs differentiation. Binds to poly-U elements and AU-rich elements (AREs) in the 3'-UTR of target mRNAs. May be involved in cytoplasmic mRNA polyadenylation. Acts cooperatively with cribp to stabilize AU-rich sequence (ARE)-containing mRNAs. May play a role during gastrulation. Required for the vegetal localization of vg1 mRNA. The sequence is that of ELAV-like protein 1-A (elavl1-a) from Xenopus laevis (African clawed frog).